The chain runs to 146 residues: Holo-[acyl-carrier-protein] synthase (146 aa).

Asp9 and Glu63 together coordinate Mg(2+).

The protein belongs to the P-Pant transferase superfamily. AcpS family. Mg(2+) is required as a cofactor.

Its subcellular location is the cytoplasm. The enzyme catalyses apo-[ACP] + CoA = holo-[ACP] + adenosine 3',5'-bisphosphate + H(+). Transfers the 4'-phosphopantetheine moiety from coenzyme A to a Ser of acyl-carrier-protein. The sequence is that of Holo-[acyl-carrier-protein] synthase from Burkholderia multivorans (strain ATCC 17616 / 249).